The chain runs to 696 residues: DNA-directed RNA polymerase subunit beta' (696 aa).

The Zn(2+) site is built by Cys-69, Cys-71, Cys-87, and Cys-90. Positions 504, 506, and 508 each coordinate Mg(2+).

It belongs to the RNA polymerase beta' chain family. RpoC1 subfamily. In terms of assembly, in plastids the minimal PEP RNA polymerase catalytic core is composed of four subunits: alpha, beta, beta', and beta''. When a (nuclear-encoded) sigma factor is associated with the core the holoenzyme is formed, which can initiate transcription. The cofactor is Mg(2+). It depends on Zn(2+) as a cofactor.

The protein localises to the plastid. It localises to the chloroplast. It catalyses the reaction RNA(n) + a ribonucleoside 5'-triphosphate = RNA(n+1) + diphosphate. Its function is as follows. DNA-dependent RNA polymerase catalyzes the transcription of DNA into RNA using the four ribonucleoside triphosphates as substrates. The polypeptide is DNA-directed RNA polymerase subunit beta' (Pinus thunbergii (Japanese black pine)).